A 218-amino-acid polypeptide reads, in one-letter code: Small ribosomal subunit protein uS7m (218 aa).

A mitochondrion-targeting transit peptide spans 1 to 19 (MSLLGRIAEKTSRLSCLRL).

It belongs to the universal ribosomal protein uS7 family. In terms of assembly, component of the mitochondrial ribosome small subunit (28S) which comprises a 12S rRNA and about 30 distinct proteins.

It localises to the mitochondrion. The protein is Small ribosomal subunit protein uS7m (mRpS7) of Drosophila melanogaster (Fruit fly).